Here is a 60-residue protein sequence, read N- to C-terminus: Large ribosomal subunit protein bL33 (60 aa).

It belongs to the bacterial ribosomal protein bL33 family.

The sequence is that of Large ribosomal subunit protein bL33 from Chlorobium luteolum (strain DSM 273 / BCRC 81028 / 2530) (Pelodictyon luteolum).